A 203-amino-acid polypeptide reads, in one-letter code: Chemotactic transduction protein ChpE (203 aa).

5 helical membrane-spanning segments follow: residues 3 to 23 (AIFL…GAVF), 46 to 66 (LIGD…LLGY), 69 to 89 (VRIP…VQGL), 123 to 143 (NVVY…GTPN), and 149 to 169 (VFFA…AALV).

Belongs to the Rht family.

The protein localises to the cell membrane. This chain is Chemotactic transduction protein ChpE (chpE), found in Pseudomonas aeruginosa (strain ATCC 15692 / DSM 22644 / CIP 104116 / JCM 14847 / LMG 12228 / 1C / PRS 101 / PAO1).